A 274-amino-acid polypeptide reads, in one-letter code: Penicillin-insensitive murein endopeptidase (274 aa).

The signal sequence occupies residues 1 to 19; it reads MNKTAIALLALLASSASLA. Intrachain disulfides connect Cys-44-Cys-265, Cys-187-Cys-235, and Cys-216-Cys-223. Zn(2+)-binding residues include His-110, His-113, Asp-120, Asp-147, His-150, and His-211. The disordered stretch occupies residues 228 to 274; sequence LPPSGDGCGAELQSWFEPPKPGTTKPEKKTPPPLPPSCQALLDEHVI.

It belongs to the peptidase M74 family. In terms of assembly, dimer. Requires Zn(2+) as cofactor.

It localises to the periplasm. Its activity is regulated as follows. Inhibited by Zn(2+) at 10 mM and by metal chelating agents EDTA and 1,10-phenanthroline. Its function is as follows. Murein endopeptidase that cleaves the D-alanyl-meso-2,6-diamino-pimelyl amide bond that connects peptidoglycan strands. Likely plays a role in the removal of murein from the sacculus and could also play a role in the integration of nascent murein strands into the sacculus. In Escherichia coli (strain K12), this protein is Penicillin-insensitive murein endopeptidase (mepA).